A 100-amino-acid polypeptide reads, in one-letter code: Large ribosomal subunit protein eL21 (100 aa).

Residues 1–21 (MVKRTHGYRYKSRKLLRKKPR) form a disordered region.

This sequence belongs to the eukaryotic ribosomal protein eL21 family.

The protein is Large ribosomal subunit protein eL21 of Pyrobaculum islandicum (strain DSM 4184 / JCM 9189 / GEO3).